The primary structure comprises 899 residues: Valine--tRNA ligase (899 aa).

The short motif at 60 to 70 (PNVTGVLHMGH) is the 'HIGH' region element. The 'KMSKS' region motif lies at 539-543 (KMSKS). ATP is bound at residue K542. The stretch at 827 to 898 (AGLIDLDEEQ…KQGLEKLAAL (72 aa)) forms a coiled coil.

Belongs to the class-I aminoacyl-tRNA synthetase family. ValS type 1 subfamily. As to quaternary structure, monomer.

It is found in the cytoplasm. It carries out the reaction tRNA(Val) + L-valine + ATP = L-valyl-tRNA(Val) + AMP + diphosphate. Its function is as follows. Catalyzes the attachment of valine to tRNA(Val). As ValRS can inadvertently accommodate and process structurally similar amino acids such as threonine, to avoid such errors, it has a 'posttransfer' editing activity that hydrolyzes mischarged Thr-tRNA(Val) in a tRNA-dependent manner. The polypeptide is Valine--tRNA ligase (Syntrophotalea carbinolica (strain DSM 2380 / NBRC 103641 / GraBd1) (Pelobacter carbinolicus)).